Here is a 205-residue protein sequence, read N- to C-terminus: Small ribosomal subunit protein uS4 (205 aa).

Positions Ser94 to Val157 constitute an S4 RNA-binding domain.

Belongs to the universal ribosomal protein uS4 family. Part of the 30S ribosomal subunit. Contacts protein S5. The interaction surface between S4 and S5 is involved in control of translational fidelity.

Functionally, one of the primary rRNA binding proteins, it binds directly to 16S rRNA where it nucleates assembly of the body of the 30S subunit. With S5 and S12 plays an important role in translational accuracy. This chain is Small ribosomal subunit protein uS4, found in Rickettsia felis (strain ATCC VR-1525 / URRWXCal2) (Rickettsia azadi).